Reading from the N-terminus, the 69-residue chain is Small ribosomal subunit protein bS21 (69 aa).

This sequence belongs to the bacterial ribosomal protein bS21 family.

The sequence is that of Small ribosomal subunit protein bS21 (rpsU) from Treponema pallidum (strain Nichols).